Consider the following 576-residue polypeptide: Sulfite reductase [NADPH] hemoprotein beta-component (576 aa).

The span at 1–12 (MDAKTQPDRSRD) shows a compositional bias: basic and acidic residues. Positions 1-26 (MDAKTQPDRSRDVSQPLDKLGPDETL) are disordered. Residues C441, C447, C486, and C490 each contribute to the [4Fe-4S] cluster site. Residue C490 participates in siroheme binding.

It belongs to the nitrite and sulfite reductase 4Fe-4S domain family. Alpha(8)-beta(8). The alpha component is a flavoprotein, the beta component is a hemoprotein. It depends on siroheme as a cofactor. The cofactor is [4Fe-4S] cluster.

The catalysed reaction is hydrogen sulfide + 3 NADP(+) + 3 H2O = sulfite + 3 NADPH + 4 H(+). It participates in sulfur metabolism; hydrogen sulfide biosynthesis; hydrogen sulfide from sulfite (NADPH route): step 1/1. Component of the sulfite reductase complex that catalyzes the 6-electron reduction of sulfite to sulfide. This is one of several activities required for the biosynthesis of L-cysteine from sulfate. In Nitrobacter winogradskyi (strain ATCC 25391 / DSM 10237 / CIP 104748 / NCIMB 11846 / Nb-255), this protein is Sulfite reductase [NADPH] hemoprotein beta-component.